A 57-amino-acid polypeptide reads, in one-letter code: Large ribosomal subunit protein bL32 (57 aa).

Belongs to the bacterial ribosomal protein bL32 family.

This chain is Large ribosomal subunit protein bL32, found in Bacillus pumilus (strain SAFR-032).